A 998-amino-acid chain; its full sequence is DNA damage-induced apoptosis suppressor protein (998 aa).

The interval 815-834 (DKQQASPSCPKNIKTPSQKI) is disordered. Residues 817–834 (QQASPSCPKNIKTPSQKI) are compositionally biased toward polar residues.

Highly expressed in colorectal and lung cancer tissues.

It is found in the cytoplasm. The protein resides in the nucleus. In terms of biological role, may be an anti-apoptotic protein involved in DNA repair or cell survival. The sequence is that of DNA damage-induced apoptosis suppressor protein (DDIAS) from Homo sapiens (Human).